The following is a 677-amino-acid chain: Multicopper oxidase GIP1 (677 aa).

The N-terminal stretch at 1–23 (MLTSPRLILLLLAWVFSALVASA) is a signal peptide. 2 consecutive Plastocyanin-like domains span residues 31–150 (ITWE…IRRK) and 179–379 (LVMV…RYKG). N76 is a glycosylation site (N-linked (GlcNAc...) asparagine). Cu cation contacts are provided by H80, H82, H130, and H132. N228, N283, N396, and N478 each carry an N-linked (GlcNAc...) asparagine glycan. One can recognise a Plastocyanin-like 3 domain in the interval 469-588 (DEGLVIRTKN…AGGMAIAILD (120 aa)). H503 lines the Cu cation pocket. The N-linked (GlcNAc...) asparagine glycan is linked to N520. The interval 629-651 (PLLAVSPSGGPKKDSGETSASDS) is disordered.

This sequence belongs to the multicopper oxidase family. Might be part of an extracellular enzyme complex composed of GIP1, aurF, aurO and aurS.

Its subcellular location is the secreted. The protein resides in the extracellular space. Its pathway is pigment biosynthesis. Its function is as follows. Multicopper oxidase; part of the gene cluster that mediates the biosynthesis of aurofusarin, a red mycelium pigment which is acting as a mycotoxin. The first step is performed by the polyketide synthase which condenses one acetyl-CoA and 6 malonyl-CoA units to form the first intermediate, the cyclic heptaketide and yellow pigment YWA1. The C2 hydroxyl group in the pyrone ring of YWA1 is probably formed during ring closure by an aldol-type cyclization reaction. The dehydratase aurZ then acts as the first tailoring enzyme in the aurofusarin biosynthetic pathway by converting YWA1 to nor-rubrofusarin. Nor-rubrofusarin is then methylated to rubrofusarin by the O-methyltransferase aurJ. Rubrofusarin is then transported across the plasma membrane by the rubrofusarin-specific pump aurT for further enzymatic processing by the extracellular complex composed of GIP1, aurF, aurO and aurS to yield aurofusarin. The polypeptide is Multicopper oxidase GIP1 (Gibberella zeae (strain ATCC MYA-4620 / CBS 123657 / FGSC 9075 / NRRL 31084 / PH-1) (Wheat head blight fungus)).